The sequence spans 130 residues: Ribosome-binding factor A (130 aa).

The protein belongs to the RbfA family. In terms of assembly, monomer. Binds 30S ribosomal subunits, but not 50S ribosomal subunits or 70S ribosomes.

It is found in the cytoplasm. Functionally, one of several proteins that assist in the late maturation steps of the functional core of the 30S ribosomal subunit. Associates with free 30S ribosomal subunits (but not with 30S subunits that are part of 70S ribosomes or polysomes). Required for efficient processing of 16S rRNA. May interact with the 5'-terminal helix region of 16S rRNA. The sequence is that of Ribosome-binding factor A from Prochlorococcus marinus (strain AS9601).